The sequence spans 356 residues: Heparan sulfate 2-O-sulfotransferase 1 (356 aa).

Over Met1–Lys11 the chain is Cytoplasmic. The chain crosses the membrane as a helical; Signal-anchor for type II membrane protein span at residues Leu12–Glu28. Positions Met24 to Arg51 form a coiled coil. Residues Asn29 to Asn356 lie on the Lumenal side of the membrane. Adenosine 3',5'-bisphosphate contacts are provided by Lys83, Thr84, Ala85, Ser86, Thr87, and Ser88. N-linked (GlcNAc...) asparagine glycosylation is found at Asn108 and Asn127. Residues His140 and His142 contribute to the active site. Residues Arg164 and Ser172 each contribute to the adenosine 3',5'-bisphosphate site. Disulfide bonds link Cys201/Cys209 and Cys222/Cys228. Residues Tyr279, Ser285, Thr290, and Lys293 each coordinate adenosine 3',5'-bisphosphate.

The protein belongs to the sulfotransferase 3 family. As to quaternary structure, homotrimer. Interacts with the C5-epimerase GLCE. In terms of processing, N-glycosylated.

It localises to the golgi apparatus membrane. In terms of biological role, catalyzes the transfer of a sulfo group from 3'-phospho-5'-adenylyl sulfate (PAPS) to the 2-OH position of iduronic acid (IdoA) or glucuronic acid (GlcA) within the heparan sulfate (HS) chain and participates in HS biosynthesis. Required for metanephric development of kidney formation, suggesting that 2-O-sulfation within HS is essential for signaling between ureteric bud and metanephric mesenchyme. The polypeptide is Heparan sulfate 2-O-sulfotransferase 1 (Homo sapiens (Human)).